Reading from the N-terminus, the 141-residue chain is Large ribosomal subunit protein uL11 (141 aa).

This sequence belongs to the universal ribosomal protein uL11 family. In terms of assembly, part of the ribosomal stalk of the 50S ribosomal subunit. Interacts with L10 and the large rRNA to form the base of the stalk. L10 forms an elongated spine to which L12 dimers bind in a sequential fashion forming a multimeric L10(L12)X complex. Post-translationally, one or more lysine residues are methylated.

Its function is as follows. Forms part of the ribosomal stalk which helps the ribosome interact with GTP-bound translation factors. The protein is Large ribosomal subunit protein uL11 of Lacticaseibacillus casei (strain BL23) (Lactobacillus casei).